Consider the following 334-residue polypeptide: Histo-blood group ABO system transferase 2 (334 aa).

At 1-15 the chain is on the cytoplasmic side; the sequence is MKDLRFGRLKCYSLH. A helical; Signal-anchor for type II membrane protein membrane pass occupies residues 16 to 36; that stretch reads LGILPLTVLVLVFFCFVCLSL. The Lumenal portion of the chain corresponds to 37-334; sequence RSQEWGHPGA…VPKNHQAIRN (298 aa). N94 carries N-linked (GlcNAc...) asparagine glycosylation. Residues 102–104, Y107, and 192–194 each bind UDP-N-acetyl-alpha-D-galactosamine; these read FAV and DVD. D192 and D194 together coordinate Mn(2+). The an alpha-L-fucosyl-(1-&gt;2)-beta-D-galactosyl derivative site is built by H214, T226, E284, and D307. The Nucleophile role is filled by E284.

This sequence belongs to the glycosyltransferase 6 family. Requires Mn(2+) as cofactor. As to expression, large intestine, caecum, stomach, pancreas, submaxillary gland and kidney (at protein level). Ubiquitous.

It is found in the golgi apparatus. The protein localises to the golgi stack membrane. The protein resides in the secreted. The enzyme catalyses an alpha-L-fucosyl-(1-&gt;2)-beta-D-galactosyl derivative + UDP-N-acetyl-alpha-D-galactosamine = an N-acetyl-alpha-D-galactosaminyl-(1-&gt;3)-[alpha-L-fucosyl-(1-&gt;2)]-beta-D-galactosyl derivative + UDP + H(+). It catalyses the reaction an alpha-L-fucosyl-(1-&gt;2)-beta-D-galactosyl derivative + UDP-alpha-D-galactose = an alpha-D-galactosyl-(1-&gt;3)-[alpha-L-fucosyl-(1-&gt;2)]-beta-D-galactosyl derivative + UDP + H(+). It functions in the pathway protein modification; protein glycosylation. In terms of biological role, possesses strong B transferase activity and weak A transferase activity. The polypeptide is Histo-blood group ABO system transferase 2 (Abo2) (Rattus norvegicus (Rat)).